Here is a 547-residue protein sequence, read N- to C-terminus: Chaperonin GroEL (547 aa).

Residues 30–33, Lys-51, 87–91, Gly-415, 479–481, and Asp-495 contribute to the ATP site; these read TLGP, DGTTT, and NAA.

Belongs to the chaperonin (HSP60) family. Forms a cylinder of 14 subunits composed of two heptameric rings stacked back-to-back. Interacts with the co-chaperonin GroES.

The protein resides in the cytoplasm. It catalyses the reaction ATP + H2O + a folded polypeptide = ADP + phosphate + an unfolded polypeptide.. In terms of biological role, together with its co-chaperonin GroES, plays an essential role in assisting protein folding. The GroEL-GroES system forms a nano-cage that allows encapsulation of the non-native substrate proteins and provides a physical environment optimized to promote and accelerate protein folding. The chain is Chaperonin GroEL from Pseudomonas paraeruginosa (strain DSM 24068 / PA7) (Pseudomonas aeruginosa (strain PA7)).